The sequence spans 553 residues: Dihydroxy-acid dehydratase (553 aa).

D78 provides a ligand contact to Mg(2+). C119 is a binding site for [2Fe-2S] cluster. 2 residues coordinate Mg(2+): D120 and K121. Residue K121 is modified to N6-carboxylysine. C191 contributes to the [2Fe-2S] cluster binding site. E444 is a binding site for Mg(2+). The active-site Proton acceptor is the S470.

It belongs to the IlvD/Edd family. In terms of assembly, homodimer. The cofactor is [2Fe-2S] cluster. Mg(2+) is required as a cofactor.

It carries out the reaction (2R)-2,3-dihydroxy-3-methylbutanoate = 3-methyl-2-oxobutanoate + H2O. The catalysed reaction is (2R,3R)-2,3-dihydroxy-3-methylpentanoate = (S)-3-methyl-2-oxopentanoate + H2O. The protein operates within amino-acid biosynthesis; L-isoleucine biosynthesis; L-isoleucine from 2-oxobutanoate: step 3/4. Its pathway is amino-acid biosynthesis; L-valine biosynthesis; L-valine from pyruvate: step 3/4. Functions in the biosynthesis of branched-chain amino acids. Catalyzes the dehydration of (2R,3R)-2,3-dihydroxy-3-methylpentanoate (2,3-dihydroxy-3-methylvalerate) into 2-oxo-3-methylpentanoate (2-oxo-3-methylvalerate) and of (2R)-2,3-dihydroxy-3-methylbutanoate (2,3-dihydroxyisovalerate) into 2-oxo-3-methylbutanoate (2-oxoisovalerate), the penultimate precursor to L-isoleucine and L-valine, respectively. The sequence is that of Dihydroxy-acid dehydratase from Methanosarcina barkeri (strain Fusaro / DSM 804).